The following is a 173-amino-acid chain: Nicotinamide-nucleotide adenylyltransferase (173 aa).

It belongs to the archaeal NMN adenylyltransferase family.

The protein localises to the cytoplasm. The catalysed reaction is beta-nicotinamide D-ribonucleotide + ATP + H(+) = diphosphate + NAD(+). It functions in the pathway cofactor biosynthesis; NAD(+) biosynthesis; NAD(+) from nicotinamide D-ribonucleotide: step 1/1. The protein is Nicotinamide-nucleotide adenylyltransferase of Methanosarcina acetivorans (strain ATCC 35395 / DSM 2834 / JCM 12185 / C2A).